We begin with the raw amino-acid sequence, 289 residues long: Undecaprenyl-diphosphatase (289 aa).

8 helical membrane-spanning segments follow: residues 23–43 (LFLG…TAHL), 56–76 (GVAV…AYFW), 104–124 (SAIV…KLFW), 135–155 (IPAI…AENV), 165–185 (LSFW…IPGV), 210–230 (FLLG…QAFG), 235–255 (VDVF…WIAI), and 269–289 (IFIT…YLAF).

The protein belongs to the UppP family.

It is found in the cell inner membrane. The enzyme catalyses di-trans,octa-cis-undecaprenyl diphosphate + H2O = di-trans,octa-cis-undecaprenyl phosphate + phosphate + H(+). Catalyzes the dephosphorylation of undecaprenyl diphosphate (UPP). Confers resistance to bacitracin. The sequence is that of Undecaprenyl-diphosphatase from Prochlorococcus marinus (strain SARG / CCMP1375 / SS120).